Consider the following 277-residue polypeptide: Putative phosphoenolpyruvate synthase regulatory protein (277 aa).

Residue Gly157–Thr164 participates in ADP binding.

Belongs to the pyruvate, phosphate/water dikinase regulatory protein family. PSRP subfamily.

It carries out the reaction [pyruvate, water dikinase] + ADP = [pyruvate, water dikinase]-phosphate + AMP + H(+). The catalysed reaction is [pyruvate, water dikinase]-phosphate + phosphate + H(+) = [pyruvate, water dikinase] + diphosphate. In terms of biological role, bifunctional serine/threonine kinase and phosphorylase involved in the regulation of the phosphoenolpyruvate synthase (PEPS) by catalyzing its phosphorylation/dephosphorylation. The protein is Putative phosphoenolpyruvate synthase regulatory protein of Photobacterium profundum (strain SS9).